We begin with the raw amino-acid sequence, 45 residues long: Small polypeptide DEVIL 23 (45 aa).

The segment at 13-44 is required for DVL/RTFL small polypeptide activity; the sequence is KSTLRCWDWCKEQRTRAYIIWRCLIFLLRWDD. Residues 22–39 traverse the membrane as a helical segment; the sequence is CKEQRTRAYIIWRCLIFL.

It belongs to the DVL/RTFL small polypeptides family.

The protein resides in the cell membrane. Its function is as follows. Small polypeptide acting as a regulatory molecule which coordinates cellular responses required for differentiation, growth and development, probably by restricting polar cell proliferation in lateral organs and coordinating socket cell recruitment and differentiation at trichome sites. In Arabidopsis thaliana (Mouse-ear cress), this protein is Small polypeptide DEVIL 23.